Here is a 111-residue protein sequence, read N- to C-terminus: Probable 4-amino-4-deoxy-L-arabinose-phosphoundecaprenol flippase subunit ArnE (111 aa).

Topologically, residues 1-35 (MIWLTLVFASLLSVAGQLCQKQATCFAAVNKRRKH) are cytoplasmic. Residues 36–56 (IVLWLGLALACLGLAMVLWLL) traverse the membrane as a helical segment. Residues 40-109 (LGLALACLGL…IIGGIVILGS (70 aa)) enclose the EamA domain. Topologically, residues 57–60 (VLQN) are periplasmic. Residues 61–81 (VPVGIAYPMLSLNFVWVTLAA) form a helical membrane-spanning segment. Over 82 to 87 (VKLWHE) the chain is Cytoplasmic. A helical transmembrane segment spans residues 88-108 (PVSLRHWCGVAFIIGGIVILG). The Periplasmic portion of the chain corresponds to 109–111 (STV).

Belongs to the ArnE family. In terms of assembly, heterodimer of ArnE and ArnF.

Its subcellular location is the cell inner membrane. Its pathway is bacterial outer membrane biogenesis; lipopolysaccharide biosynthesis. In terms of biological role, translocates 4-amino-4-deoxy-L-arabinose-phosphoundecaprenol (alpha-L-Ara4N-phosphoundecaprenol) from the cytoplasmic to the periplasmic side of the inner membrane. This chain is Probable 4-amino-4-deoxy-L-arabinose-phosphoundecaprenol flippase subunit ArnE, found in Escherichia coli (strain UTI89 / UPEC).